Consider the following 119-residue polypeptide: Large ribosomal subunit protein uL18 (119 aa).

A disordered region spans residues 1–25 (MITKIDKNKVRKKRHARVRSKISGT). A compositionally biased stretch (basic residues) spans 9 to 20 (KVRKKRHARVRS).

Belongs to the universal ribosomal protein uL18 family. Part of the 50S ribosomal subunit; part of the 5S rRNA/L5/L18/L25 subcomplex. Contacts the 5S and 23S rRNAs.

In terms of biological role, this is one of the proteins that bind and probably mediate the attachment of the 5S RNA into the large ribosomal subunit, where it forms part of the central protuberance. The protein is Large ribosomal subunit protein uL18 of Listeria innocua serovar 6a (strain ATCC BAA-680 / CLIP 11262).